The following is a 233-amino-acid chain: Pre-hexon-linking protein VIII (233 aa).

Threonine 64 carries the post-translational modification Phosphothreonine; by host. Positions 112-163 are excised as a propeptide; the sequence is SRHVRFRGRSSPYSPGPIKRLIIRGRGIQLNDEVVSSLTGLRPDGVFQLGGA. Residue serine 180 is modified to Phosphoserine; by host.

Belongs to the adenoviridae hexon-linking protein family. As to quaternary structure, interacts with the peripentonal hexons as well as the hexons in the facets. Part of a complex composed of the core-capsid bridging protein, the endosome lysis protein VI and the hexon-linking protein VIII; these interactions bridge the virus core to the capsid. Post-translationally, cleaved by the viral protease during virion maturation. May cause the middle segment to be shed from the capsid.

It localises to the virion. Its subcellular location is the host nucleus. In terms of biological role, structural component of the virion that acts as a cement protein on the capsid interior and which glue the peripentonal hexons and group-of-nine hexons together. This chain is Pre-hexon-linking protein VIII, found in Homo sapiens (Human).